Reading from the N-terminus, the 147-residue chain is UPF0306 protein YhbP (147 aa).

Belongs to the UPF0306 family.

The polypeptide is UPF0306 protein YhbP (Escherichia fergusonii (strain ATCC 35469 / DSM 13698 / CCUG 18766 / IAM 14443 / JCM 21226 / LMG 7866 / NBRC 102419 / NCTC 12128 / CDC 0568-73)).